A 2131-amino-acid chain; its full sequence is Sodium channel protein para (2131 aa).

The Cytoplasmic portion of the chain corresponds to 1 to 148 (MTEDSDSISE…FNPIRRVAIY (148 aa)). Residues 35 to 48 (HEKQKELERKRAEG) show a composition bias toward basic and acidic residues. The tract at residues 35 to 84 (HEKQKELERKRAEGEVPQYGRKKKQKEIRYDDEDEDEGPQPDPTLEQGVP) is disordered. Residues 64 to 73 (YDDEDEDEGP) show a composition bias toward acidic residues. The stretch at 134–467 (WMLDPFNPIR…AAKAAKLEER (334 aa)) is one I repeat. Residues 149 to 172 (ILVHPLFSLFIITTILVNCILMIM) form a helical membrane-spanning segment. Residues 173–180 (PTTPTVES) are Extracellular-facing. The helical transmembrane segment at 181–199 (TEVIFTGIYTFESAVKVMA) threads the bilayer. Over 200 to 212 (RGFILCPFTYLRD) the chain is Cytoplasmic. A helical membrane pass occupies residues 213-231 (AWNWLDFVVIALAYVTMGI). Topologically, residues 232–237 (DLGNLA) are extracellular. A helical; Voltage-sensor membrane pass occupies residues 238–257 (ALRTFRVLRALKTVAIVPGL). Residues 258–273 (KTIVGAVIESVKNLRD) lie on the Cytoplasmic side of the membrane. A helical transmembrane segment spans residues 274-297 (VIILTMFSLSVFALMGLQIYMGVL). Residues 298–373 (TQKCIKKFPL…PNYGYTSFDS (76 aa)) are Extracellular-facing. A disulfide bond links cysteine 301 and cysteine 350. Asparagine 313, asparagine 325, and asparagine 343 each carry an N-linked (GlcNAc...) asparagine glycan. The pore-forming intramembrane region spans 374–398 (FGWAFLSAFRLMTQDFWEDLYQLVL). The Extracellular segment spans residues 399–405 (RAAGPWH). The helical transmembrane segment at 406 to 427 (MLFFIVIIFLGSFYLVNLILAI) threads the bilayer. At 428–812 (VAMSYDELQK…VWLKFQEWVS (385 aa)) the chain is on the cytoplasmic side. A phosphoserine; by PKA mark is found at serine 553 and serine 570. Disordered regions lie at residues 553–572 (STTS…GSRS) and 671–691 (KESK…TNGG). Over residues 680 to 691 (TRNQSVGATNGG) the composition is skewed to polar residues. One copy of the II repeat lies at 799–1069 (DCCWVWLKFQ…IAEAFNRIGR (271 aa)). Residues 813 to 837 (LIVFDPFVELFITLCIVVNTMFMAM) traverse the membrane as a helical segment. The Extracellular portion of the chain corresponds to 838–848 (DHHDMNKEMER). A helical transmembrane segment spans residues 849–873 (VLKSGNYFFTATFAIEATMKLMAMS). Over 874-880 (PKYYFQE) the chain is Cytoplasmic. Residues 881-900 (GWNIFDFIIVALSLLELGLE) form a helical membrane-spanning segment. Residues 901–906 (GVQGLS) lie on the Extracellular side of the membrane. The chain crosses the membrane as a helical; Voltage-sensor span at residues 907–926 (VLRSFRLLRVFKLAKSWPTL). Residues 927-941 (NLLISIMGRTMGALG) are Cytoplasmic-facing. The chain crosses the membrane as a helical span at residues 942 to 963 (NLTFVLCIIIFIFAVMGMQLFG). The Extracellular segment spans residues 964–985 (KNYHDHKDRFPDGDLPRWNFTD). Asparagine 982 carries N-linked (GlcNAc...) asparagine glycosylation. The segment at residues 986 to 1006 (FMHSFMIVFRVLCGEWIESMW) is an intramembrane region (pore-forming). Topologically, residues 1007-1013 (DCMYVGD) are extracellular. Cysteine 1008 and cysteine 1016 are oxidised to a cystine. The chain crosses the membrane as a helical span at residues 1014 to 1041 (VSCIPFFLATVVIGNLVVLNLFLALLLS). Topologically, residues 1042-1296 (NFGSSSLSAP…WGNLRLKTFQ (255 aa)) are cytoplasmic. The interval 1166–1240 (DMKNNKPKKS…LDEEGECEEG (75 aa)) is disordered. Positions 1177 to 1194 (YLNNATDDDTASINSYGS) are enriched in polar residues. The span at 1199–1225 (PFKDESHKGSAETMEGEEKRDASKEDL) shows a compositional bias: basic and acidic residues. The span at 1226-1240 (GLDEELDEEGECEEG) shows a compositional bias: acidic residues. The III repeat unit spans residues 1284-1591 (WQGWGNLRLK…QKKYYNAMKK (308 aa)). Residues 1297 to 1320 (LIENKYFETAVITMILMSSLALAL) form a helical membrane-spanning segment. Topologically, residues 1321-1334 (EDVHLPQRPILQDI) are extracellular. The helical transmembrane segment at 1335–1359 (LYYMDRIFTVIFFLEMLIKWLALGF) threads the bilayer. Topologically, residues 1360–1365 (KVYFTN) are cytoplasmic. The chain crosses the membrane as a helical span at residues 1366–1387 (AWCWLDFVIVMVSLINFVASLV). The Extracellular portion of the chain corresponds to 1388–1391 (GAGG). Residues 1392-1413 (IQAFKTMRTLRALRPLRAMSRM) traverse the membrane as a helical; Voltage-sensor segment. Over 1414–1432 (QGMRVVVNALVQAIPSIFN) the chain is Cytoplasmic. A helical membrane pass occupies residues 1433-1454 (VLLVCLIFWLIFAIMGVQLFAG). The Extracellular segment spans residues 1455–1495 (KYFKCEDMNGTKLSHEIIPNRNACESENYTWVNSAMNFDHV). N-linked (GlcNAc...) asparagine glycans are attached at residues asparagine 1463 and asparagine 1482. The segment at residues 1496–1517 (GNAYLCLFQVATFKGWIQIMND) is an intramembrane region (pore-forming). The Extracellular segment spans residues 1518-1533 (AIDSREVDKQPIRETN). Residues 1534–1560 (IYMYLYFVFFIIFGSFFTLNLFIGVII) traverse the membrane as a helical segment. The Cytoplasmic segment spans residues 1561–1614 (DNFNEQKKKAGGSLEMFMTEDQKKYYNAMKKMGSKKPLKAIPRPRWRPQAIVFE). An IV repeat occupies 1601–1862 (IPRPRWRPQA…NMYIAVILEN (262 aa)). Residues 1615 to 1638 (IVTDKKFDIIIMLFIGLNMFTMTL) form a helical membrane-spanning segment. The Extracellular segment spans residues 1639–1649 (DRYDASDTYNA). The chain crosses the membrane as a helical span at residues 1650 to 1673 (VLDYLNAIFVVIFSSECLLKIFAL). Topologically, residues 1674–1679 (RYHYFI) are cytoplasmic. Residues 1680–1703 (EPWNLFDVVVVILSILGLVLSDII) form a helical membrane-spanning segment. The Extracellular segment spans residues 1704 to 1713 (EKYFVSPTLL). Residues 1714-1735 (RVVRVAKVGRVLRLVKGAKGIR) form a helical; Voltage-sensor membrane-spanning segment. Topologically, residues 1736 to 1750 (TLLFALAMSLPALFN) are cytoplasmic. The chain crosses the membrane as a helical span at residues 1751-1773 (ICLLLFLVMFIFAIFGMSFFMHV). At 1774–1787 (KEKSGINDVYNFKT) the chain is on the extracellular side. An intramembrane region (pore-forming) is located at residues 1788 to 1810 (FGQSMILLFQMSTSAGWDGVLDA). The Extracellular portion of the chain corresponds to 1811–1835 (IINEEACDPPDNDKGYPGNCGSATV). The chain crosses the membrane as a helical span at residues 1836–1860 (GITFLLSYLVISFLIVINMYIAVIL). Residues 1861 to 2131 (ENYSQATEDV…PSITSRTADV (271 aa)) lie on the Cytoplasmic side of the membrane. The EF-hand domain occupies 1877–1912 (DDYDMYYEIWQQFDPEGTQYIRYDQLSEFLDVLEPP). Residues 2001–2096 (HKARGEGGGS…GSPGAGSAGR (96 aa)) are disordered. Acidic residues predominate over residues 2021–2035 (GDPDAGDPAPDEATD). Positions 2068 to 2088 (AAAAAAAAAAAAAAGTTTAGS) are enriched in low complexity.

It belongs to the sodium channel (TC 1.A.1.10) family. Para subfamily.

The protein localises to the cell membrane. Functionally, mediates the voltage-dependent sodium ion permeability of excitable membranes. Assuming opened or closed conformations in response to the voltage difference across the membrane, the protein forms a sodium-selective channel through which Na(+) ions may pass in accordance with their electrochemical gradient. This is Sodium channel protein para (para) from Drosophila melanogaster (Fruit fly).